The sequence spans 199 residues: Peroxiredoxin-1 (199 aa).

Serine 2 bears the N-acetylserine mark. The Thioredoxin domain maps to 6-165; that stretch reads AKIGHRAPQF…TLRLVQAFQF (160 aa). At lysine 7 the chain carries N6-acetyllysine; alternate. Residue lysine 7 forms a Glycyl lysine isopeptide (Lys-Gly) (interchain with G-Cter in SUMO2); alternate linkage. Residues lysine 16 and lysine 27 each carry the N6-acetyllysine modification. N6-acetyllysine; alternate is present on lysine 35. Lysine 35 bears the N6-succinyllysine; alternate mark. Catalysis depends on cysteine 52, which acts as the Cysteine sulfenic acid (-SOH) intermediate. Position 90 is a phosphothreonine (threonine 90). Lysine 120 is covalently cross-linked (Glycyl lysine isopeptide (Lys-Gly) (interchain with G-Cter in SUMO2)). N6-acetyllysine is present on lysine 136. Residues 176–199 are disordered; the sequence is GWKPGSDTIKPDVQKSKEYFSKQK. Positions 184–199 are enriched in basic and acidic residues; that stretch reads IKPDVQKSKEYFSKQK. Lysine 185 is covalently cross-linked (Glycyl lysine isopeptide (Lys-Gly) (interchain with G-Cter in SUMO1)). Lysine 197 is subject to N6-acetyllysine.

This sequence belongs to the peroxiredoxin family. AhpC/Prx1 subfamily. Homodimer; disulfide-linked, upon oxidation. 5 homodimers assemble to form a ring-like decamer. Interacts with GDPD5; forms a mixed-disulfide with GDPD5. Interacts with SESN1 and SESN2. Interacts with FAM107A. Post-translationally, phosphorylated on Thr-90 during the M-phase, which leads to a decrease in enzymatic activity. Acetylation increases reducing activity and resistance to superoxidation. Deacetylated by HDAC6 which decreases reducing activity.

It is found in the cytoplasm. The catalysed reaction is a hydroperoxide + [thioredoxin]-dithiol = an alcohol + [thioredoxin]-disulfide + H2O. Functionally, thiol-specific peroxidase that catalyzes the reduction of hydrogen peroxide and organic hydroperoxides to water and alcohols, respectively. Plays a role in cell protection against oxidative stress by detoxifying peroxides and as sensor of hydrogen peroxide-mediated signaling events. Might participate in the signaling cascades of growth factors and tumor necrosis factor-alpha by regulating the intracellular concentrations of H(2)O(2). Reduces an intramolecular disulfide bond in GDPD5 that gates the ability to GDPD5 to drive postmitotic motor neuron differentiation. This Bos taurus (Bovine) protein is Peroxiredoxin-1 (PRDX1).